The sequence spans 510 residues: NAD(P)H-quinone oxidoreductase subunit 2 A, chloroplastic (510 aa).

13 helical membrane passes run 24–44 (LLLF…GLIL), 57–77 (IPWL…ALLF), 99–119 (IFQF…VEYI), 124–144 (MAIT…MFLC), 149–169 (LITI…LSGY), 183–203 (YLLM…WLYG), 227–247 (PGIS…LSPA), 295–315 (WHLL…LIAI), 323–343 (MLAY…IVGD), 354–374 (YMLF…LFGL), 395–415 (ALSL…AGFF), 418–438 (LYLF…IGLL), and 484–504 (MIVC…IIAI).

It belongs to the complex I subunit 2 family. In terms of assembly, NDH is composed of at least 16 different subunits, 5 of which are encoded in the nucleus.

The protein resides in the plastid. The protein localises to the chloroplast thylakoid membrane. It carries out the reaction a plastoquinone + NADH + (n+1) H(+)(in) = a plastoquinol + NAD(+) + n H(+)(out). The enzyme catalyses a plastoquinone + NADPH + (n+1) H(+)(in) = a plastoquinol + NADP(+) + n H(+)(out). NDH shuttles electrons from NAD(P)H:plastoquinone, via FMN and iron-sulfur (Fe-S) centers, to quinones in the photosynthetic chain and possibly in a chloroplast respiratory chain. The immediate electron acceptor for the enzyme in this species is believed to be plastoquinone. Couples the redox reaction to proton translocation, and thus conserves the redox energy in a proton gradient. In Solanum tuberosum (Potato), this protein is NAD(P)H-quinone oxidoreductase subunit 2 A, chloroplastic.